Consider the following 213-residue polypeptide: uncharacterized protein (213 aa).

This is an uncharacterized protein from Escherichia coli (strain UTI89 / UPEC).